A 718-amino-acid chain; its full sequence is Phospholipid phosphatase-related protein type 3 (718 aa).

The next 3 helical transmembrane spans lie at 18–38, 70–90, and 133–153; these read LPCFYFVELPIVASSIVSLYF, LIPLLMLLSLAFAAPAASIMV, and FVGVHVFGLCATALVTDVIQL. N-linked (GlcNAc...) asparagine glycosylation occurs at N169. 3 helical membrane passes run 207-227, 233-253, and 263-283; these read HATLSAFAAVYVSMYFNSVIS, LKPILVFAFAIAAGVCGLTQI, and VYAGFLIGAGIAAYLACHAVG. Positions 313 to 347 are disordered; sequence SVYQQNKSVSTDELGPPGRLEGAPRPVAREKTSLG. Positions 314–323 are enriched in polar residues; it reads VYQQNKSVST. The N-linked (GlcNAc...) asparagine glycan is linked to N318. S322 and S353 each carry phosphoserine. T376 carries the phosphothreonine modification. The segment at 416 to 488 is disordered; the sequence is LEGRGLGLPD…GPRVILPPRA (73 aa). The residue at position 428 (S428) is a Phosphoserine. Acidic residues predominate over residues 439–462; it reads MAEEEEEEEDEEEEEEEEEEEDEG. At S508 the chain carries Phosphoserine. The segment covering 545-571 has biased composition (low complexity); that stretch reads APGAPGPKAAETASSSSASSDSSQYRS. The interval 545 to 577 is disordered; sequence APGAPGPKAAETASSSSASSDSSQYRSPSDRDS. Position 641 is a phosphoserine (S641). Over residues 664–680 the composition is skewed to low complexity; the sequence is GEGLPPLGAADGALGPG. A disordered region spans residues 664–702; that stretch reads GEGLPPLGAADGALGPGSRESTLRRHAGGLGLAEREAEA.

Belongs to the PA-phosphatase related phosphoesterase family.

The protein localises to the membrane. In Homo sapiens (Human), this protein is Phospholipid phosphatase-related protein type 3.